The chain runs to 133 residues: Putative redox protein FMP46, mitochondrial (133 aa).

A mitochondrion-targeting transit peptide spans 1-21 (MSFWKTLQRQPRTISLFTNDI). The active site involves C97.

This sequence belongs to the FMP46 family.

It localises to the mitochondrion. Putative mitochondrial redox protein which could be involved in the reduction of small toxic molecules. This is Putative redox protein FMP46, mitochondrial (FMP46) from Saccharomyces cerevisiae (strain ATCC 204508 / S288c) (Baker's yeast).